The primary structure comprises 78 residues: Omega-conotoxin-like 12 (78 aa).

Positions 1–22 (MKLTCVVIVAVLLLTACQLITA) are cleaved as a signal peptide. A propeptide spanning residues 23-42 (DDSRGTQKHRSLRSTTKVSK) is cleaved from the precursor. Disulfide bonds link cysteine 46–cysteine 62, cysteine 53–cysteine 65, and cysteine 61–cysteine 72.

This sequence belongs to the conotoxin O1 superfamily. As to expression, expressed by the venom duct.

The protein localises to the secreted. Omega-conotoxins act at presynaptic membranes, they bind and block voltage-gated calcium channels (Cav). The protein is Omega-conotoxin-like 12 of Conus striatus (Striated cone).